The primary structure comprises 167 residues: Lipoprotein signal peptidase (167 aa).

Transmembrane regions (helical) follow at residues 8–28, 61–81, and 93–113; these read FFLL…YWIM, FSHW…LWLW, and FGLT…ICFY. Active-site residues include aspartate 117 and aspartate 136. The helical transmembrane segment at 126–146 threads the bilayer; it reads IFYFAVFNLADTFITLGVIAI.

This sequence belongs to the peptidase A8 family.

The protein localises to the cell inner membrane. The enzyme catalyses Release of signal peptides from bacterial membrane prolipoproteins. Hydrolyzes -Xaa-Yaa-Zaa-|-(S,diacylglyceryl)Cys-, in which Xaa is hydrophobic (preferably Leu), and Yaa (Ala or Ser) and Zaa (Gly or Ala) have small, neutral side chains.. Its pathway is protein modification; lipoprotein biosynthesis (signal peptide cleavage). Its function is as follows. This protein specifically catalyzes the removal of signal peptides from prolipoproteins. The protein is Lipoprotein signal peptidase of Bartonella quintana (strain Toulouse) (Rochalimaea quintana).